The following is a 353-amino-acid chain: Photosystem II protein D1 (353 aa).

An N-acetylthreonine modification is found at T2. Residue T2 is modified to Phosphothreonine. Transmembrane regions (helical) follow at residues 29–46 (YIGW…TATS), 118–133 (HFLL…EWEL), and 142–156 (WIAV…AATA). H118 lines the chlorophyll a pocket. Y126 serves as a coordination point for pheophytin a. Residues D170 and E189 each coordinate [CaMn4O5] cluster. The helical transmembrane segment at 197–218 (FHMLGVAGVFGGSLFSAMHGSL) threads the bilayer. H198 serves as a coordination point for chlorophyll a. A quinone-binding positions include H215 and 264–265 (SF). H215 serves as a coordination point for Fe cation. H272 provides a ligand contact to Fe cation. A helical membrane pass occupies residues 274–288 (FLAAWPVVGIWFTAL). [CaMn4O5] cluster is bound by residues H332, E333, and A344. A propeptide spanning residues 345 to 353 (AIEAPAVNG) is cleaved from the precursor.

Belongs to the reaction center PufL/M/PsbA/D family. As to quaternary structure, PSII is composed of 1 copy each of membrane proteins PsbA, PsbB, PsbC, PsbD, PsbE, PsbF, PsbH, PsbI, PsbJ, PsbK, PsbL, PsbM, PsbT, PsbX, PsbY, PsbZ, Psb30/Ycf12, at least 3 peripheral proteins of the oxygen-evolving complex and a large number of cofactors. It forms dimeric complexes. Requires The D1/D2 heterodimer binds P680, chlorophylls that are the primary electron donor of PSII, and subsequent electron acceptors. It shares a non-heme iron and each subunit binds pheophytin, quinone, additional chlorophylls, carotenoids and lipids. D1 provides most of the ligands for the Mn4-Ca-O5 cluster of the oxygen-evolving complex (OEC). There is also a Cl(-1) ion associated with D1 and D2, which is required for oxygen evolution. The PSII complex binds additional chlorophylls, carotenoids and specific lipids. as cofactor. Post-translationally, tyr-161 forms a radical intermediate that is referred to as redox-active TyrZ, YZ or Y-Z. In terms of processing, C-terminally processed by CTPA; processing is essential to allow assembly of the oxygen-evolving complex and thus photosynthetic growth.

It is found in the plastid. It localises to the chloroplast thylakoid membrane. The catalysed reaction is 2 a plastoquinone + 4 hnu + 2 H2O = 2 a plastoquinol + O2. Its function is as follows. Photosystem II (PSII) is a light-driven water:plastoquinone oxidoreductase that uses light energy to abstract electrons from H(2)O, generating O(2) and a proton gradient subsequently used for ATP formation. It consists of a core antenna complex that captures photons, and an electron transfer chain that converts photonic excitation into a charge separation. The D1/D2 (PsbA/PsbD) reaction center heterodimer binds P680, the primary electron donor of PSII as well as several subsequent electron acceptors. This chain is Photosystem II protein D1, found in Conocephalum japonicum (Liverwort).